The chain runs to 1091 residues: Voltage-dependent calcium channel subunit alpha-2/delta-3 (1091 aa).

A signal peptide spans M1 to S33. Topologically, residues E34–G1068 are extracellular. N-linked (GlcNAc...) asparagine glycosylation occurs at N166. The VWFA domain maps to D256–L438. 3 residues coordinate a divalent metal cation: D262, S264, and S266. An MIDAS-like motif motif is present at residues D262–S266. An N-linked (GlcNAc...) asparagine glycan is attached at N309. Cysteines 412 and 1055 form a disulfide. The Cache domain occupies W452–R549. N-linked (GlcNAc...) asparagine glycans are attached at residues N553 and N632. Residue Y924 is modified to Phosphotyrosine. The chain crosses the membrane as a helical span at residues G1069–F1089. At S1090 to R1091 the chain is on the cytoplasmic side.

The protein belongs to the calcium channel subunit alpha-2/delta family. Dimer formed of alpha-2-2 and delta-2 chains; disulfide-linked. Voltage-dependent calcium channels are multisubunit complexes, consisting of alpha-1 (CACNA1), alpha-2 (CACNA2D), beta (CACNB) and delta (CACNA2D) subunits in a 1:1:1:1 ratio. Post-translationally, N-glycosylated. In terms of processing, may be proteolytically processed into subunits alpha-2-3 and delta-3 that are disulfide-linked. It is however unclear whether such cleavage really takes place in vivo and has a functional role. In terms of tissue distribution, brain-specific. Predominantly expressed in the caudate putamen, entorhinal complex, hippocampus and cortex.

It is found in the membrane. The alpha-2/delta subunit of voltage-dependent calcium channels regulates calcium current density and activation/inactivation kinetics of the calcium channel. Acts as a regulatory subunit for P/Q-type calcium channel (CACNA1A), N-type (CACNA1B), L-type (CACNA1C OR CACNA1D) but not T-type (CACNA1G). This Mus musculus (Mouse) protein is Voltage-dependent calcium channel subunit alpha-2/delta-3 (Cacna2d3).